A 472-amino-acid polypeptide reads, in one-letter code: 3-isopropylmalate dehydratase large subunit (472 aa).

Residues Cys-352, Cys-413, and Cys-416 each contribute to the [4Fe-4S] cluster site.

Belongs to the aconitase/IPM isomerase family. LeuC type 1 subfamily. In terms of assembly, heterodimer of LeuC and LeuD. [4Fe-4S] cluster is required as a cofactor.

The enzyme catalyses (2R,3S)-3-isopropylmalate = (2S)-2-isopropylmalate. It functions in the pathway amino-acid biosynthesis; L-leucine biosynthesis; L-leucine from 3-methyl-2-oxobutanoate: step 2/4. Its function is as follows. Catalyzes the isomerization between 2-isopropylmalate and 3-isopropylmalate, via the formation of 2-isopropylmaleate. The protein is 3-isopropylmalate dehydratase large subunit of Laribacter hongkongensis (strain HLHK9).